Here is a 700-residue protein sequence, read N- to C-terminus: Calpain-2 catalytic subunit (700 aa).

A2 is subject to N-acetylalanine. Positions 2 to 19 (AGIAAKLVKDREAAEGLG) are cleaved as a propeptide — anchors to the small subunit. The Calpain catalytic domain maps to 45 to 344 (LFQDPSFPAI…YSRLEICNLT (300 aa)). 3 residues coordinate Ca(2+): I89, G91, and D96. C105 is an active-site residue. Residues E175, Q229, and K230 each contribute to the Ca(2+) site. Active-site residues include H262 and N286. Positions 292, 299, and 323 each coordinate Ca(2+). Residues 345–514 (PDTLTSDTYK…KKADYQAVDD (170 aa)) form a domain III region. The linker stretch occupies residues 515-529 (EIEANLEEFDISEDD). A domain IV region spans residues 530 to 700 (IDDGFRRLFA…LISWLCFSVL (171 aa)). Ca(2+) is bound by residues A542, D545, E547, E552, D585, D587, S589, K591, E596, D615, D617, S619, T621, E626, D658, and N661. 2 consecutive EF-hand domains span residues 572–605 (FSIETCKIMVDMLDSDGSGKLGLKEFYILWTKIQ) and 602–637 (TKIQKYQKIYREIDVDRSGTMNSYEMRKALEEAGFK). Positions 667–700 (VRLETLFKIFKQLDPENTGTIELDLISWLCFSVL) constitute an EF-hand 3 domain.

It belongs to the peptidase C2 family. Forms a heterodimer with a small (regulatory) subunit (CAPNS1). Interacts with CPEB3; this leads to cleavage of CPEB3. It depends on Ca(2+) as a cofactor.

It is found in the cytoplasm. Its subcellular location is the cell membrane. The enzyme catalyses Broad endopeptidase specificity.. Its activity is regulated as follows. Activated by 200-1000 micromolar concentrations of calcium and inhibited by calpastatin. In terms of biological role, calcium-regulated non-lysosomal thiol-protease which catalyzes limited proteolysis of substrates involved in cytoskeletal remodeling and signal transduction. Proteolytically cleaves MYOC at 'Arg-226'. Proteolytically cleaves CPEB3 following neuronal stimulation which abolishes CPEB3 translational repressor activity, leading to translation of CPEB3 target mRNAs. The sequence is that of Calpain-2 catalytic subunit (CAPN2) from Macaca fascicularis (Crab-eating macaque).